Consider the following 547-residue polypeptide: Glucose-6-phosphate isomerase (547 aa).

Glutamate 352 serves as the catalytic Proton donor. Catalysis depends on residues histidine 383 and lysine 511.

Belongs to the GPI family.

The protein resides in the cytoplasm. The catalysed reaction is alpha-D-glucose 6-phosphate = beta-D-fructose 6-phosphate. It participates in carbohydrate biosynthesis; gluconeogenesis. Its pathway is carbohydrate degradation; glycolysis; D-glyceraldehyde 3-phosphate and glycerone phosphate from D-glucose: step 2/4. In terms of biological role, catalyzes the reversible isomerization of glucose-6-phosphate to fructose-6-phosphate. This Rhodospirillum rubrum (strain ATCC 11170 / ATH 1.1.1 / DSM 467 / LMG 4362 / NCIMB 8255 / S1) protein is Glucose-6-phosphate isomerase.